Here is a 180-residue protein sequence, read N- to C-terminus: UPF0149 protein XC_0904 (180 aa).

Belongs to the UPF0149 family.

The polypeptide is UPF0149 protein XC_0904 (Xanthomonas campestris pv. campestris (strain 8004)).